The sequence spans 230 residues: Large ribosomal subunit protein uL1 (230 aa).

It belongs to the universal ribosomal protein uL1 family. In terms of assembly, part of the 50S ribosomal subunit.

In terms of biological role, binds directly to 23S rRNA. The L1 stalk is quite mobile in the ribosome, and is involved in E site tRNA release. Protein L1 is also a translational repressor protein, it controls the translation of the L11 operon by binding to its mRNA. This chain is Large ribosomal subunit protein uL1, found in Gluconobacter oxydans (strain 621H) (Gluconobacter suboxydans).